Consider the following 947-residue polypeptide: Protocadherin alpha-4 (947 aa).

Residues 1–29 form the signal peptide; that stretch reads MEFSWGSGQESRRLLLLLLLLSAWEAGNG. 6 consecutive Cadherin domains span residues 30–133, 134–242, 243–350, 351–455, 456–565, and 588–678; these read QLHY…PPVF, PATQ…APAF, DRTI…VPDL, EFKS…APAF, AQPE…APAL, and DHVV…APKA. The Extracellular portion of the chain corresponds to 30 to 697; the sequence is QLHYSVSEEA…GPDAALVDVN (668 aa). Cys96 and Cys102 form a disulfide bridge. N-linked (GlcNAc...) asparagine glycosylation is found at Asn139, Asn257, and Asn265. N-linked (GlcNAc...) asparagine glycosylation is present at Asn548. Residues 698-718 form a helical membrane-spanning segment; the sequence is VYLIIAICAVSSLLVLTLLLY. The Cytoplasmic segment spans residues 719–947; the sequence is TALRCSAPPT…GNSTTDNSDQ (229 aa). PXXP repeat units follow at residues 734–737, 774–777, 796–799, 829–832, 870–873, and 888–891; these read PGKP, PSLP, PRQP, PGGP, PGNP, and PGSP. Positions 734–891 are 6 X 4 AA repeats of P-X-X-P; the sequence is PGKPTLVCSS…PDKFIIPGSP (158 aa). A required for interaction with FYN region spans residues 738-947; the sequence is TLVCSSAVGS…GNSTTDNSDQ (210 aa). Disordered regions lie at residues 754–805 and 828–853; these read RRPR…DWRY and GPGG…EVSP. The segment at 892–947 is disordered; that stretch reads AIISIRQEPANSQIDKSDFITFGKKEETKKKKKKKKGNKTQEKKEKGNSTTDNSDQ. Residues 906–920 show a composition bias toward basic and acidic residues; the sequence is DKSDFITFGKKEETK.

As to quaternary structure, forms homodimers in trans (molecules expressed by two different cells). Forms promiscuous heterodimers in cis (at the plasma membrane of the same cell) with other protocadherins. Interacts with FYN.

Its subcellular location is the cell membrane. Functionally, calcium-dependent cell-adhesion protein involved in cells self-recognition and non-self discrimination. Thereby, it is involved in the establishment and maintenance of specific neuronal connections in the brain. The polypeptide is Protocadherin alpha-4 (Pan troglodytes (Chimpanzee)).